The chain runs to 360 residues: Phospho-N-acetylmuramoyl-pentapeptide-transferase (360 aa).

The next 10 helical transmembrane spans lie at 21-41, 73-93, 98-118, 132-152, 168-188, 199-219, 236-256, 263-283, 288-308, and 338-358; these read YITF…LWIG, TMGG…WADL, IWFV…DDYW, WKYF…YAVG, VMPQ…VGTS, GLAI…AWAT, AGEL…FLWY, VFMG…IAVL, LLLV…ILQV, and VIVR…VTLK.

The protein belongs to the glycosyltransferase 4 family. MraY subfamily. The cofactor is Mg(2+).

The protein localises to the cell inner membrane. It carries out the reaction UDP-N-acetyl-alpha-D-muramoyl-L-alanyl-gamma-D-glutamyl-meso-2,6-diaminopimeloyl-D-alanyl-D-alanine + di-trans,octa-cis-undecaprenyl phosphate = di-trans,octa-cis-undecaprenyl diphospho-N-acetyl-alpha-D-muramoyl-L-alanyl-D-glutamyl-meso-2,6-diaminopimeloyl-D-alanyl-D-alanine + UMP. It functions in the pathway cell wall biogenesis; peptidoglycan biosynthesis. Functionally, catalyzes the initial step of the lipid cycle reactions in the biosynthesis of the cell wall peptidoglycan: transfers peptidoglycan precursor phospho-MurNAc-pentapeptide from UDP-MurNAc-pentapeptide onto the lipid carrier undecaprenyl phosphate, yielding undecaprenyl-pyrophosphoryl-MurNAc-pentapeptide, known as lipid I. In Actinobacillus pleuropneumoniae serotype 5b (strain L20), this protein is Phospho-N-acetylmuramoyl-pentapeptide-transferase.